Here is a 260-residue protein sequence, read N- to C-terminus: Adenosylcobinamide-GDP ribazoletransferase (260 aa).

The next 6 membrane-spanning stretches (helical) occupy residues Trp-7 to Pro-27, Leu-45 to Gly-65, Ala-117 to Phe-137, Trp-145 to Tyr-165, Leu-187 to Ile-207, and Trp-210 to Phe-230.

Belongs to the CobS family. Requires Mg(2+) as cofactor.

The protein localises to the cell inner membrane. It catalyses the reaction alpha-ribazole + adenosylcob(III)inamide-GDP = adenosylcob(III)alamin + GMP + H(+). It carries out the reaction alpha-ribazole 5'-phosphate + adenosylcob(III)inamide-GDP = adenosylcob(III)alamin 5'-phosphate + GMP + H(+). The protein operates within cofactor biosynthesis; adenosylcobalamin biosynthesis; adenosylcobalamin from cob(II)yrinate a,c-diamide: step 7/7. Functionally, joins adenosylcobinamide-GDP and alpha-ribazole to generate adenosylcobalamin (Ado-cobalamin). Also synthesizes adenosylcobalamin 5'-phosphate from adenosylcobinamide-GDP and alpha-ribazole 5'-phosphate. In Synechocystis sp. (strain ATCC 27184 / PCC 6803 / Kazusa), this protein is Adenosylcobinamide-GDP ribazoletransferase.